The sequence spans 248 residues: Probable septum site-determining protein MinC (248 aa).

Positions 115 to 144 (PTAVSPPPPPPPPARAEPAPPAARPAPGRM) are disordered. Over residues 118-138 (VSPPPPPPPPARAEPAPPAAR) the composition is skewed to pro residues.

Belongs to the MinC family. As to quaternary structure, interacts with MinD and FtsZ.

Its function is as follows. Cell division inhibitor that blocks the formation of polar Z ring septums. Rapidly oscillates between the poles of the cell to destabilize FtsZ filaments that have formed before they mature into polar Z rings. Prevents FtsZ polymerization. The polypeptide is Probable septum site-determining protein MinC (Xanthomonas euvesicatoria pv. vesicatoria (strain 85-10) (Xanthomonas campestris pv. vesicatoria)).